Here is a 967-residue protein sequence, read N- to C-terminus: A disintegrin and metalloproteinase with thrombospondin motifs 1 (967 aa).

Residues 1–54 (MQPEVPLGSGKLKPCSDMGDIQRAAKFRSSQSAHMLLLLLASITMLLCVRGAHG) form the signal peptide. The propeptide occupies 55 to 252 (RPTEEDEELV…TGPGSIRKKR (198 aa)). The disordered stretch occupies residues 198–252 (RGSGGAKCGVMDEETLPTSNSGRESQNTPDQWPLRNPTPQGAGKPTGPGSIRKKR). Residues 203–210 (AKCGVMDE) carry the Cysteine switch motif. Cys205 contributes to the Zn(2+) binding site. Positions 213–227 (LPTSNSGRESQNTPD) are enriched in polar residues. A Peptidase M12B domain is found at 258 to 467 (RYVETMLVAD…GHGECLMDKP (210 aa)). Ca(2+) contacts are provided by Glu261, Asp344, and Asp351. 4 disulfides stabilise this stretch: Cys333/Cys385, Cys362/Cys367, Cys379/Cys462, and Cys417/Cys446. His401 provides a ligand contact to Zn(2+). The active site involves Glu402. Positions 405 and 411 each coordinate Zn(2+). Cys462 and Asp465 together coordinate Ca(2+). Positions 476–558 (DLPGTLYDAN…TDMKHFATPV (83 aa)) constitute a Disintegrin domain. 4 disulfides stabilise this stretch: Cys488-Cys511, Cys499-Cys521, Cys506-Cys540, and Cys534-Cys545. N-linked (GlcNAc...) asparagine glycosylation is present at Asn547. Residues 559–614 (HGSWGPWGPWGDCSRTCGGGVQYTMRECDNPVPKNGGKYCEGKRVRYRSCNIEDCP) enclose the TSP type-1 1 domain. 3 disulfide bridges follow: Cys571/Cys608, Cys575/Cys613, and Cys586/Cys598. 3 N-linked (GlcNAc...) asparagine glycosylation sites follow: Asn720, Asn764, and Asn782. The segment at 725–857 (KKISGTVTST…PFNAIPTFSE (133 aa)) is spacer. TSP type-1 domains are found at residues 854–910 (TFSE…LPCP) and 911–967 (RWQV…TQCS). N-linked (GlcNAc...) asparagine glycosylation occurs at Asn945.

The cofactor is Zn(2+). The precursor is cleaved by a furin endopeptidase. In terms of processing, glycosylated. Can be O-fucosylated by POFUT2 on a serine or a threonine residue found within the consensus sequence C1-X(2)-(S/T)-C2-G of the TSP type-1 repeat domains where C1 and C2 are the first and second cysteine residue of the repeat, respectively. Fucosylated repeats can then be further glycosylated by the addition of a beta-1,3-glucose residue by the glucosyltransferase, B3GALTL. Fucosylation mediates the efficient secretion of ADAMTS family members. Can also be C-glycosylated with one or two mannose molecules on tryptophan residues within the consensus sequence W-X-X-W of the TPRs, and N-glycosylated. These other glycosylations can also facilitate secretion.

It is found in the secreted. The protein resides in the extracellular space. The protein localises to the extracellular matrix. Functionally, metalloprotease which cleaves aggrecan, a cartilage proteoglycan, at the '1683-Glu-|-Leu-1684' site (within the chondroitin sulfate attachment domain), and may be involved in its turnover. Also cleaves COMP. Has angiogenic inhibitor activity. May play a critical role in follicular rupture. The polypeptide is A disintegrin and metalloproteinase with thrombospondin motifs 1 (Adamts1) (Rattus norvegicus (Rat)).